The chain runs to 288 residues: Probable pectinesterase 56 (288 aa).

A signal peptide spans 1–27; sequence MAMTSTMQLLVLSFLVIASLFLGATVA. Residues asparagine 55 and asparagine 95 are each glycosylated (N-linked (GlcNAc...) asparagine). Positions 120 and 150 each coordinate substrate. Catalysis depends on aspartate 173, which acts as the Proton donor. Aspartate 194 (nucleophile) is an active-site residue. Asparagine 242 carries an N-linked (GlcNAc...) asparagine glycan. Positions 262 and 264 each coordinate substrate.

This sequence belongs to the pectinesterase family.

It is found in the secreted. Its subcellular location is the cell wall. It carries out the reaction [(1-&gt;4)-alpha-D-galacturonosyl methyl ester](n) + n H2O = [(1-&gt;4)-alpha-D-galacturonosyl](n) + n methanol + n H(+). It participates in glycan metabolism; pectin degradation; 2-dehydro-3-deoxy-D-gluconate from pectin: step 1/5. In terms of biological role, acts in the modification of cell walls via demethylesterification of cell wall pectin. This is Probable pectinesterase 56 (PME56) from Arabidopsis thaliana (Mouse-ear cress).